Consider the following 66-residue polypeptide: Large ribosomal subunit protein bL35 (66 aa).

The protein belongs to the bacterial ribosomal protein bL35 family.

The sequence is that of Large ribosomal subunit protein bL35 from Cereibacter sphaeroides (strain ATCC 17029 / ATH 2.4.9) (Rhodobacter sphaeroides).